We begin with the raw amino-acid sequence, 379 residues long: DNA replication and repair protein RecF (379 aa).

An ATP-binding site is contributed by 30-37 (GDNAQGKS).

It belongs to the RecF family.

Its subcellular location is the cytoplasm. In terms of biological role, the RecF protein is involved in DNA metabolism; it is required for DNA replication and normal SOS inducibility. RecF binds preferentially to single-stranded, linear DNA. It also seems to bind ATP. This is DNA replication and repair protein RecF from Thermosynechococcus vestitus (strain NIES-2133 / IAM M-273 / BP-1).